The sequence spans 357 residues: NADH-quinone oxidoreductase subunit H (357 aa).

Helical transmembrane passes span 26–46, 92–112, 127–147, 164–184, 203–223, 259–279, 294–314, and 329–349; these read LVKI…LTLW, ALFV…WAVI, LLFV…AGWA, MISY…VTGS, GLTF…IYII, FFLA…LMFL, VPGW…FIWF, and LGWK…AIWM.

The protein belongs to the complex I subunit 1 family. In terms of assembly, NDH-1 is composed of 14 different subunits. Subunits NuoA, H, J, K, L, M, N constitute the membrane sector of the complex.

It is found in the cell inner membrane. The enzyme catalyses a quinone + NADH + 5 H(+)(in) = a quinol + NAD(+) + 4 H(+)(out). Functionally, NDH-1 shuttles electrons from NADH, via FMN and iron-sulfur (Fe-S) centers, to quinones in the respiratory chain. The immediate electron acceptor for the enzyme in this species is believed to be ubiquinone. Couples the redox reaction to proton translocation (for every two electrons transferred, four hydrogen ions are translocated across the cytoplasmic membrane), and thus conserves the redox energy in a proton gradient. This subunit may bind ubiquinone. The polypeptide is NADH-quinone oxidoreductase subunit H (Janthinobacterium sp. (strain Marseille) (Minibacterium massiliensis)).